Consider the following 155-residue polypeptide: Ribosomal RNA large subunit methyltransferase H (155 aa).

S-adenosyl-L-methionine-binding positions include Leu72, Gly104, and 123–128 (LSKMTF).

The protein belongs to the RNA methyltransferase RlmH family. Homodimer.

The protein localises to the cytoplasm. It catalyses the reaction pseudouridine(1915) in 23S rRNA + S-adenosyl-L-methionine = N(3)-methylpseudouridine(1915) in 23S rRNA + S-adenosyl-L-homocysteine + H(+). Functionally, specifically methylates the pseudouridine at position 1915 (m3Psi1915) in 23S rRNA. This Cytophaga hutchinsonii (strain ATCC 33406 / DSM 1761 / CIP 103989 / NBRC 15051 / NCIMB 9469 / D465) protein is Ribosomal RNA large subunit methyltransferase H.